The sequence spans 146 residues: MGNRLNGSYLSNTDMSIEDKQNKYNEAIEDCKICNKVYIKQSGKIDKKELTRIKKLDFFYSQKSDHEIERMFFNVPNGTFLLTDDATNENLFIAQKDLENGSLNIAKLEFKGKALYIDGKDYFSLENYLKTFEDFYKYPLIYNKNE.

The protein belongs to the asfivirus MGF 100 family.

Functionally, plays a role in virus cell tropism, and may be required for efficient virus replication in macrophages. This Ornithodoros (relapsing fever ticks) protein is Protein MGF 100-3L.